We begin with the raw amino-acid sequence, 328 residues long: Ribosomal RNA large subunit methyltransferase F (328 aa).

Residues 1-38 are disordered; sequence MTDTPKPPRKKPQRPAKPAAPREKATLHPRNRHQGHYD.

Belongs to the methyltransferase superfamily. METTL16/RlmF family.

The protein localises to the cytoplasm. It carries out the reaction adenosine(1618) in 23S rRNA + S-adenosyl-L-methionine = N(6)-methyladenosine(1618) in 23S rRNA + S-adenosyl-L-homocysteine + H(+). Specifically methylates the adenine in position 1618 of 23S rRNA. The polypeptide is Ribosomal RNA large subunit methyltransferase F (Pseudomonas syringae pv. tomato (strain ATCC BAA-871 / DC3000)).